The sequence spans 342 residues: Nucleoid-associated protein SO_2177 (342 aa).

This sequence belongs to the YejK family.

It localises to the cytoplasm. Its subcellular location is the nucleoid. The protein is Nucleoid-associated protein SO_2177 of Shewanella oneidensis (strain ATCC 700550 / JCM 31522 / CIP 106686 / LMG 19005 / NCIMB 14063 / MR-1).